A 1293-amino-acid polypeptide reads, in one-letter code: Phosphoribosylformylglycinamidine synthase (1293 aa).

Residues 305–316 (GAATGSGGEIRD), 384–386 (TGY), and A676 each bind ATP. The interval 307–326 (ATGSGGEIRDEGATGRGSKP) is disordered. Mg(2+) is bound by residues D677, E716, N720, and D884. S886 contributes to the ATP binding site. Positions 1040 to 1293 (MAILREQGVN…MFRNARVKIG (254 aa)) constitute a Glutamine amidotransferase type-1 domain. The active-site Nucleophile is the C1133. Catalysis depends on residues H1258 and E1260.

In the N-terminal section; belongs to the FGAMS family. Monomer.

It is found in the cytoplasm. The catalysed reaction is N(2)-formyl-N(1)-(5-phospho-beta-D-ribosyl)glycinamide + L-glutamine + ATP + H2O = 2-formamido-N(1)-(5-O-phospho-beta-D-ribosyl)acetamidine + L-glutamate + ADP + phosphate + H(+). Its pathway is purine metabolism; IMP biosynthesis via de novo pathway; 5-amino-1-(5-phospho-D-ribosyl)imidazole from N(2)-formyl-N(1)-(5-phospho-D-ribosyl)glycinamide: step 1/2. Functionally, phosphoribosylformylglycinamidine synthase involved in the purines biosynthetic pathway. Catalyzes the ATP-dependent conversion of formylglycinamide ribonucleotide (FGAR) and glutamine to yield formylglycinamidine ribonucleotide (FGAM) and glutamate. This Shewanella frigidimarina (strain NCIMB 400) protein is Phosphoribosylformylglycinamidine synthase.